The sequence spans 202 residues: Imidazoleglycerol-phosphate dehydratase (202 aa).

It belongs to the imidazoleglycerol-phosphate dehydratase family.

The protein resides in the cytoplasm. It catalyses the reaction D-erythro-1-(imidazol-4-yl)glycerol 3-phosphate = 3-(imidazol-4-yl)-2-oxopropyl phosphate + H2O. It functions in the pathway amino-acid biosynthesis; L-histidine biosynthesis; L-histidine from 5-phospho-alpha-D-ribose 1-diphosphate: step 6/9. The chain is Imidazoleglycerol-phosphate dehydratase from Rhodopirellula baltica (strain DSM 10527 / NCIMB 13988 / SH1).